Reading from the N-terminus, the 261-residue chain is Undecaprenyl-diphosphatase 2 (261 aa).

8 consecutive transmembrane segments (helical) span residues 1 to 21 (MLEA…PISS), 38 to 58 (PGKT…CVVF), 75 to 95 (FAFA…GATL), 103 to 123 (LESP…ILVI), 138 to 158 (MSPA…VPGV), 178 to 198 (AAEF…AYSL), 212 to 232 (LIAL…KGFI), and 240 to 260 (FAPF…LILM).

Belongs to the UppP family.

The protein resides in the cell inner membrane. The enzyme catalyses di-trans,octa-cis-undecaprenyl diphosphate + H2O = di-trans,octa-cis-undecaprenyl phosphate + phosphate + H(+). Functionally, catalyzes the dephosphorylation of undecaprenyl diphosphate (UPP). Confers resistance to bacitracin. In Paramagnetospirillum magneticum (strain ATCC 700264 / AMB-1) (Magnetospirillum magneticum), this protein is Undecaprenyl-diphosphatase 2.